Here is a 143-residue protein sequence, read N- to C-terminus: Small ribosomal subunit protein eS12 (143 aa).

Glycyl lysine isopeptide (Lys-Gly) (interchain with G-Cter in ubiquitin) cross-links involve residues Lys-85, Lys-95, and Lys-114.

This sequence belongs to the eukaryotic ribosomal protein eS12 family. In terms of assembly, component of the small ribosomal subunit (SSU). Mature yeast ribosomes consist of a small (40S) and a large (60S) subunit. The 40S small subunit contains 1 molecule of ribosomal RNA (18S rRNA) and 33 different proteins (encoded by 57 genes). The large 60S subunit contains 3 rRNA molecules (25S, 5.8S and 5S rRNA) and 46 different proteins (encoded by 81 genes).

The protein resides in the cytoplasm. Functionally, component of the ribosome, a large ribonucleoprotein complex responsible for the synthesis of proteins in the cell. The small ribosomal subunit (SSU) binds messenger RNAs (mRNAs) and translates the encoded message by selecting cognate aminoacyl-transfer RNA (tRNA) molecules. The large subunit (LSU) contains the ribosomal catalytic site termed the peptidyl transferase center (PTC), which catalyzes the formation of peptide bonds, thereby polymerizing the amino acids delivered by tRNAs into a polypeptide chain. The nascent polypeptides leave the ribosome through a tunnel in the LSU and interact with protein factors that function in enzymatic processing, targeting, and the membrane insertion of nascent chains at the exit of the ribosomal tunnel. The chain is Small ribosomal subunit protein eS12 from Saccharomyces cerevisiae (strain ATCC 204508 / S288c) (Baker's yeast).